A 324-amino-acid polypeptide reads, in one-letter code: Muscleblind-like protein (324 aa).

2 consecutive C3H1-type zinc fingers follow at residues 38 to 66 (WLQV…HPPP) and 72 to 100 (QGRV…HPPQ).

This sequence belongs to the muscleblind family. As to expression, expressed in neurons around the pharynx.

It localises to the nucleus. Functionally, binds to RNA with repeat sequences 5'-CUG-3' and 5'-CCUG-3'. This chain is Muscleblind-like protein (mbl-1), found in Caenorhabditis elegans.